Reading from the N-terminus, the 360-residue chain is MERVYNFSAGPSILPLPVLEKVQKELVNYNGTGMSIMEMSHRSSYFQSIIDEAGSLLRELMNIPDEYEVLFLQGGASLQFSMIPLNVMNTYKKAGYILTGSWSKKAMQEAEKVGEVQVIASSENEKFTTIPRLDGLLGDEKLDYVHITTNNTIEGTKYVDIPHVDKVPLVADMSSNILSERYDVSKFGLIYAGAQKNLGPAGLTIAIIKRDLIGGADRSCPTMLNYETYSKNNSLYNTPPSFSIYVTKLVLEWLKEQGGVSAIEEQNRMKSSLLYNFLDESKLFTSPVDPTYRSLMNIPFTTPSEELNSEFLQKAKERGLVTLKGHRSVGGMRASIYNAMPAEGVQQLVNYMKEFELENR.

Residue Arg-42 participates in L-glutamate binding. Pyridoxal 5'-phosphate contacts are provided by residues 76–77 (AS), Trp-102, Thr-152, Asp-172, and Gln-195. N6-(pyridoxal phosphate)lysine is present on Lys-196. 237-238 (NT) is a pyridoxal 5'-phosphate binding site.

This sequence belongs to the class-V pyridoxal-phosphate-dependent aminotransferase family. SerC subfamily. In terms of assembly, homodimer. Requires pyridoxal 5'-phosphate as cofactor.

The protein localises to the cytoplasm. It carries out the reaction O-phospho-L-serine + 2-oxoglutarate = 3-phosphooxypyruvate + L-glutamate. The catalysed reaction is 4-(phosphooxy)-L-threonine + 2-oxoglutarate = (R)-3-hydroxy-2-oxo-4-phosphooxybutanoate + L-glutamate. It participates in amino-acid biosynthesis; L-serine biosynthesis; L-serine from 3-phospho-D-glycerate: step 2/3. Functionally, catalyzes the reversible conversion of 3-phosphohydroxypyruvate to phosphoserine and of 3-hydroxy-2-oxo-4-phosphonooxybutanoate to phosphohydroxythreonine. This Bacillus cereus (strain ATCC 10987 / NRS 248) protein is Phosphoserine aminotransferase.